Here is a 457-residue protein sequence, read N- to C-terminus: NADP-specific glutamate dehydrogenase (457 aa).

Lys-111 is a catalytic residue.

Belongs to the Glu/Leu/Phe/Val dehydrogenases family. In terms of assembly, homohexamer.

The catalysed reaction is L-glutamate + NADP(+) + H2O = 2-oxoglutarate + NH4(+) + NADPH + H(+). The protein is NADP-specific glutamate dehydrogenase (gdhA) of Agaricus bisporus (White button mushroom).